The primary structure comprises 616 residues: Protein phosphatase EYA4 (616 aa).

The residue at position 1 (Met1) is an N-acetylmethionine. Disordered regions lie at residues 1-66 (MEDT…VTTN), 186-211 (SQTQ…PGQT), and 277-345 (ADGT…DSDL). Glycyl lysine isopeptide (Lys-Gly) (interchain with G-Cter in SUMO2) cross-links involve residues Lys14 and Lys52. Positions 56–66 (SGLSSTSVTTN) are enriched in low complexity. The segment covering 277 to 311 (ADGTSSSTSTYQLQESLQGLTSQPGEFDTVQSPST) has biased composition (polar residues). Ser338 bears the Phosphoserine mark. Catalysis depends on Asp352, which acts as the Nucleophile. Mg(2+) is bound by residues Asp352, Asp354, and Asp580. The Proton donor role is filled by Asp354.

It belongs to the HAD-like hydrolase superfamily. EYA family. As to quaternary structure, interacts with SIX3; translocates EYA4 from the cytoplasm to the nucleus and promotes activation of their target genes. The cofactor is Mg(2+). In the embryo, expressed mainly in the craniofacial mesenchyme, dermamyotome and limb.

The protein resides in the cytoplasm. It is found in the nucleus. The enzyme catalyses O-phospho-L-tyrosyl-[protein] + H2O = L-tyrosyl-[protein] + phosphate. In terms of biological role, tyrosine phosphatase that specifically dephosphorylates 'Tyr-142' of histone H2AX (H2AXY142ph). 'Tyr-142' phosphorylation of histone H2AX plays a central role in DNA repair and acts as a mark that distinguishes between apoptotic and repair responses to genotoxic stress. Promotes efficient DNA repair by dephosphorylating H2AX, promoting the recruitment of DNA repair complexes containing MDC1. Its function as histone phosphatase probably explains its role in transcription regulation during organogenesis. May be involved in development of the eye. The sequence is that of Protein phosphatase EYA4 (Eya4) from Mus musculus (Mouse).